A 384-amino-acid polypeptide reads, in one-letter code: FAD-dependent urate hydroxylase (384 aa).

Residues Gly11, 30-31 (EA), Ser43, and Val125 contribute to the FAD site. Residues Asn178, Arg204, and 216-218 (YFF) contribute to the substrate site. FAD-binding positions include Asp285 and 295–299 (GQGGC).

This sequence belongs to the FAD-dependent urate hydroxylase family. The cofactor is FAD.

It carries out the reaction urate + NADH + O2 + H(+) = 5-hydroxyisourate + NAD(+) + H2O. The protein operates within purine metabolism; urate degradation. In terms of biological role, catalyzes the hydroxylation of uric acid to 5-hydroxyisourate. The sequence is that of FAD-dependent urate hydroxylase (hpxO) from Klebsiella oxytoca.